The sequence spans 234 residues: Zinc finger FYVE domain-containing protein 21 (234 aa).

An FYVE-type zinc finger spans residues 44-104 (DKECPRCMQC…QCADCALVSH (61 aa)). 8 residues coordinate Zn(2+): Cys50, Cys53, Cys66, Cys69, Cys74, Cys77, Cys96, and Cys99. A PH-like region spans residues 107–234 (AEFYDKQLKV…TKLLYESRDQ (128 aa)).

In terms of assembly, interacts with PTK2/FAK1. In terms of tissue distribution, widely expressed.

Its subcellular location is the cell junction. It localises to the focal adhesion. It is found in the cytoplasmic vesicle. The protein resides in the endosome. Its function is as follows. Plays a role in cell adhesion, and thereby in cell motility which requires repeated formation and disassembly of focal adhesions. Regulates microtubule-induced PTK2/FAK1 dephosphorylation, an event important for focal adhesion disassembly, as well as integrin beta-1/ITGB1 cell surface expression. This chain is Zinc finger FYVE domain-containing protein 21 (Zfyve21), found in Mus musculus (Mouse).